We begin with the raw amino-acid sequence, 566 residues long: Proline--tRNA ligase (566 aa).

It belongs to the class-II aminoacyl-tRNA synthetase family. ProS type 1 subfamily. As to quaternary structure, homodimer.

Its subcellular location is the cytoplasm. It catalyses the reaction tRNA(Pro) + L-proline + ATP = L-prolyl-tRNA(Pro) + AMP + diphosphate. Catalyzes the attachment of proline to tRNA(Pro) in a two-step reaction: proline is first activated by ATP to form Pro-AMP and then transferred to the acceptor end of tRNA(Pro). As ProRS can inadvertently accommodate and process non-cognate amino acids such as alanine and cysteine, to avoid such errors it has two additional distinct editing activities against alanine. One activity is designated as 'pretransfer' editing and involves the tRNA(Pro)-independent hydrolysis of activated Ala-AMP. The other activity is designated 'posttransfer' editing and involves deacylation of mischarged Ala-tRNA(Pro). The misacylated Cys-tRNA(Pro) is not edited by ProRS. In Staphylococcus haemolyticus (strain JCSC1435), this protein is Proline--tRNA ligase.